A 152-amino-acid polypeptide reads, in one-letter code: MAKNTLSSRFRKVDIDEYDENKFVDDQLQEEPAEPQGPDEAEVDSLIRQGELLRAFQSALRNSPVNSKNQVAKERTQAIVLKVLTSFKSNEIEKAVNTLDPNGIDLLMKYIYKGFEKPTENSSAILLQWHEKAFVIGGLGSIVRVLTSRKTV.

The segment at 21-44 (NKFVDDQLQEEPAEPQGPDEAEVD) is disordered. Acidic residues predominate over residues 27-43 (QLQEEPAEPQGPDEAEV).

This sequence belongs to the ARPC5 family. In terms of assembly, component of the Arp2/3 complex composed of actr2/arp2, actr3/arp3, arpc1 (arpc1a or arpc1b), arpc2, arpc3, arpc4 and arpc5.

The protein resides in the cytoplasm. The protein localises to the cytoskeleton. It is found in the cell projection. Its subcellular location is the nucleus. In terms of biological role, component of the Arp2/3 complex, a multiprotein complex that mediates actin polymerization upon stimulation by nucleation-promoting factor (NPF). The Arp2/3 complex mediates the formation of branched actin networks in the cytoplasm, providing the force for cell motility. In addition to its role in the cytoplasmic cytoskeleton, the Arp2/3 complex also promotes actin polymerization in the nucleus, thereby regulating gene transcription and repair of damaged DNA. The Arp2/3 complex promotes homologous recombination (HR) repair in response to DNA damage by promoting nuclear actin polymerization, leading to drive motility of double-strand breaks (DSBs). The polypeptide is Actin-related protein 2/3 complex subunit 5-B (arpc5-b) (Xenopus laevis (African clawed frog)).